A 539-amino-acid chain; its full sequence is Sorting nexin-27 (539 aa).

The interval 1–40 (MADEDGEGIHPSTPHRNGGGGGGSGLHCAGNGGGGGGGPR) is disordered. A compositionally biased stretch (gly residues) spans 17–39 (NGGGGGGSGLHCAGNGGGGGGGP). The PDZ domain occupies 41–134 (VVRIVKSESG…ELILTVLSVP (94 aa)). 2 positions are modified to phosphoserine: Ser49 and Ser60. Positions 159–267 (QAVPISVPTY…EFLSESDENY (109 aa)) constitute a PX domain. Residues 271-360 (SDVELRVALP…TCLTIRKWLF (90 aa)) enclose the Ras-associating domain. Residues 271 to 360 (SDVELRVALP…TCLTIRKWLF (90 aa)) are FERM-like region F1. Residues 371 to 419 (NDLAVTYFFHQAVDDVKKGYIKAEEKSYQLQKLYEQRKMVMYLNMLRTC) are FERM-like region F2. The segment at 423–523 (NEIIFPHCAC…RVFCELKWRK (101 aa)) is FERM-like region F3.

Core component of the SNX27-retromer, a multiprotein complex composed of SNX27, the WASH complex and the retromer complex. Interacts (via PDZ domain) with a number of target transmembrane proteins (via PDZ-binding motif): ABCC4, ADRB2, ARHGEF7, GRIA1, GRIA2, GRIN1, GRIN2A GRIN2C, KCNJ6, KCNJ9 and SLC2A1/GLUT1. Interacts (via the FERM-like regions) with the WASH complex. Interacts with SNX1. Interacts with CYTIP. Interacts with DGKZ. Interacts with MCC. Interacts (via PDZ domains) with SLC9A3; directs SLC9A3 membrane insertion from early endosomes to the plasma membrane. In terms of tissue distribution, isoform 1 is predominantly expressed in the testis, whereas isoform 2 is predominant in various brain regions, including, neocortex, paleocortex, striatum, hippocampus, cerebellum and brain stem. Expressed in cells of hematopoietic origin.

It localises to the early endosome membrane. The protein resides in the cytoplasm. It is found in the cytosol. Involved in the retrograde transport from endosome to plasma membrane, a trafficking pathway that promotes the recycling of internalized transmembrane proteins. Following internalization, endocytosed transmembrane proteins are delivered to early endosomes and recycled to the plasma membrane instead of being degraded in lysosomes. SNX27 specifically binds and directs sorting of a subset of transmembrane proteins containing a PDZ-binding motif at the C-terminus: following interaction with target transmembrane proteins, associates with the retromer complex, preventing entry into the lysosomal pathway, and promotes retromer-tubule based plasma membrane recycling. SNX27 also binds with the WASH complex. Interacts with membranes containing phosphatidylinositol-3-phosphate (PtdIns(3P)). May participate in establishment of natural killer cell polarity. Recruits CYTIP to early endosomes. In Rattus norvegicus (Rat), this protein is Sorting nexin-27 (Snx27).